Reading from the N-terminus, the 178-residue chain is Acireductone dioxygenase (178 aa).

Histidine 100, histidine 102, glutamate 106, and histidine 145 together coordinate Fe(2+). The Ni(2+) site is built by histidine 100, histidine 102, glutamate 106, and histidine 145.

This sequence belongs to the acireductone dioxygenase (ARD) family. In terms of assembly, monomer. Fe(2+) serves as cofactor. It depends on Ni(2+) as a cofactor.

It catalyses the reaction 1,2-dihydroxy-5-(methylsulfanyl)pent-1-en-3-one + O2 = 3-(methylsulfanyl)propanoate + CO + formate + 2 H(+). The catalysed reaction is 1,2-dihydroxy-5-(methylsulfanyl)pent-1-en-3-one + O2 = 4-methylsulfanyl-2-oxobutanoate + formate + 2 H(+). The protein operates within amino-acid biosynthesis; L-methionine biosynthesis via salvage pathway; L-methionine from S-methyl-5-thio-alpha-D-ribose 1-phosphate: step 5/6. Catalyzes 2 different reactions between oxygen and the acireductone 1,2-dihydroxy-3-keto-5-methylthiopentene (DHK-MTPene) depending upon the metal bound in the active site. Fe-containing acireductone dioxygenase (Fe-ARD) produces formate and 2-keto-4-methylthiobutyrate (KMTB), the alpha-ketoacid precursor of methionine in the methionine recycle pathway. Ni-containing acireductone dioxygenase (Ni-ARD) produces methylthiopropionate, carbon monoxide and formate, and does not lie on the methionine recycle pathway. The sequence is that of Acireductone dioxygenase from Bacillus velezensis (strain DSM 23117 / BGSC 10A6 / LMG 26770 / FZB42) (Bacillus amyloliquefaciens subsp. plantarum).